Here is a 534-residue protein sequence, read N- to C-terminus: SWI/SNF complex component SNF12 homolog (534 aa).

The span at 1 to 12 (MSGNNNNPQKPQ) shows a compositional bias: polar residues. 2 disordered regions span residues 1–33 (MSGNNNNPQKPQGSAPLPFGNPGMASASVPGNQ) and 78–132 (MTMN…SPMR). Residues 94 to 105 (PSSPSLTTPGSL) show a composition bias toward low complexity. An SWIB/MDM2 domain is found at 314–391 (YVPEKFKLST…SQKISHHLSP (78 aa)).

The protein belongs to the SMARCD family. In terms of assembly, part of a SWI-SNF complex.

The protein resides in the nucleus. In terms of biological role, involved in transcriptional activation and repression of select genes by chromatin remodeling (alteration of DNA-nucleosome topology). This Arabidopsis thaliana (Mouse-ear cress) protein is SWI/SNF complex component SNF12 homolog.